A 177-amino-acid chain; its full sequence is Large ribosomal subunit protein uL6 (177 aa).

Belongs to the universal ribosomal protein uL6 family. In terms of assembly, part of the 50S ribosomal subunit.

This protein binds to the 23S rRNA, and is important in its secondary structure. It is located near the subunit interface in the base of the L7/L12 stalk, and near the tRNA binding site of the peptidyltransferase center. The sequence is that of Large ribosomal subunit protein uL6 from Haemophilus influenzae (strain 86-028NP).